A 97-amino-acid polypeptide reads, in one-letter code: Acylphosphatase (97 aa).

The Acylphosphatase-like domain maps to 9-97; sequence RKHIVVTGLV…ETARAFGVRQ (89 aa). Residues Arg-24 and Asn-42 contribute to the active site.

This sequence belongs to the acylphosphatase family.

The catalysed reaction is an acyl phosphate + H2O = a carboxylate + phosphate + H(+). This Bifidobacterium longum (strain NCC 2705) protein is Acylphosphatase (acyP).